Reading from the N-terminus, the 238-residue chain is Adapter protein MecA (238 aa).

Basic and acidic residues predominate over residues Gln-120–Arg-136. Positions Gln-120–Thr-139 are disordered.

It belongs to the MecA family. Homodimer.

Functionally, enables the recognition and targeting of unfolded and aggregated proteins to the ClpC protease or to other proteins involved in proteolysis. This chain is Adapter protein MecA, found in Staphylococcus saprophyticus subsp. saprophyticus (strain ATCC 15305 / DSM 20229 / NCIMB 8711 / NCTC 7292 / S-41).